Consider the following 469-residue polypeptide: tRNA (cytosine(72)-C(5))-methyltransferase NSUN6 (469 aa).

The PUA domain maps to 111–203; that stretch reads QCEAIVGAQC…MGIRMTEPVY (93 aa). S-adenosyl-L-methionine is bound by residues 242–248, aspartate 266, aspartate 293, and aspartate 323; that span reads CAAPGGK. Cysteine 373 functions as the Nucleophile in the catalytic mechanism. An N6-acetyllysine modification is found at lysine 419.

Belongs to the class I-like SAM-binding methyltransferase superfamily. RsmB/NOP family.

The protein localises to the cytoplasm. The catalysed reaction is cytidine(72) in tRNA(Thr) + S-adenosyl-L-methionine = 5-methylcytidine(72) in tRNA(Thr) + S-adenosyl-L-homocysteine + H(+). It catalyses the reaction cytidine(72) in tRNA(Cys) + S-adenosyl-L-methionine = 5-methylcytidine(72) in tRNA(Cys) + S-adenosyl-L-homocysteine + H(+). S-adenosyl-L-methionine-dependent methyltransferase that specifically methylates the C5 position of cytosine 72 in tRNA(Thr)(TGT) and tRNA(Cys)(GCA). In vitro also methylates tRNA(Thr)(AGT). Methylation requires, in the acceptor stem region, the presence of the 3'-CCA terminus, the target site C72, the discriminator base U73, and the second and third base pairs (2:71 and 3:70) in the tRNA substrates. The protein is tRNA (cytosine(72)-C(5))-methyltransferase NSUN6 of Homo sapiens (Human).